A 343-amino-acid polypeptide reads, in one-letter code: Probable siderophore transport system permease protein YfhA (343 aa).

9 consecutive transmembrane segments (helical) span residues 15–35 (WIVFLVLLGLTAAVLIISAGL), 69–89 (ILTALCAGVCLAAAGAILQGL), 97–117 (PDIIGITGGAAVAVVLLMMFF), 130–150 (WLPAAAFIGASAVGLIVYLLA), 160–180 (LVLIGIGFSMSAQAMTTLLMI), 204–224 (QHVKIAIILSVILLFICFVAL), 249–269 (FFLLLLSTALTGCAVSVAGTI), 289–309 (GALLPASALIGALLVLTADIV), and 317–337 (VEVPAGVFTAAIGAPYFIYLL).

Belongs to the binding-protein-dependent transport system permease family. FecCD subfamily. In terms of assembly, the complex is composed of one ATP-binding protein (YusV), two transmembrane proteins (YfiZ and YfhA) and a solute-binding protein (YfiY).

It is found in the cell membrane. Functionally, part of the ABC transporter complex YfiYZ/YfhA/YusV involved in import of the iron-hydroxamate siderophores schizokinen, arthrobactin and corprogen. The polypeptide is Probable siderophore transport system permease protein YfhA (yfhA) (Bacillus subtilis (strain 168)).